Consider the following 354-residue polypeptide: tRNA-specific 2-thiouridylase MnmA (354 aa).

Residues 6-13 and leucine 33 each bind ATP; that span reads LLSGGVDS. The active-site Nucleophile is the cysteine 100. A disulfide bond links cysteine 100 and cysteine 195. Glycine 123 is an ATP binding site. The tract at residues 145–147 is interaction with tRNA; it reads KDQ. Residue cysteine 195 is the Cysteine persulfide intermediate of the active site.

This sequence belongs to the MnmA/TRMU family.

It localises to the cytoplasm. It carries out the reaction S-sulfanyl-L-cysteinyl-[protein] + uridine(34) in tRNA + AH2 + ATP = 2-thiouridine(34) in tRNA + L-cysteinyl-[protein] + A + AMP + diphosphate + H(+). Functionally, catalyzes the 2-thiolation of uridine at the wobble position (U34) of tRNA, leading to the formation of s(2)U34. This Borrelia turicatae (strain 91E135) protein is tRNA-specific 2-thiouridylase MnmA.